The chain runs to 244 residues: Phosphoadenosine 5'-phosphosulfate reductase (244 aa).

Cysteine 239 acts as the Nucleophile; cysteine thiosulfonate intermediate in catalysis.

It belongs to the PAPS reductase family. CysH subfamily.

It localises to the cytoplasm. The catalysed reaction is [thioredoxin]-disulfide + sulfite + adenosine 3',5'-bisphosphate + 2 H(+) = [thioredoxin]-dithiol + 3'-phosphoadenylyl sulfate. Its pathway is sulfur metabolism; hydrogen sulfide biosynthesis; sulfite from sulfate: step 3/3. In terms of biological role, catalyzes the formation of sulfite from phosphoadenosine 5'-phosphosulfate (PAPS) using thioredoxin as an electron donor. The chain is Phosphoadenosine 5'-phosphosulfate reductase from Salmonella agona (strain SL483).